Consider the following 240-residue polypeptide: Small ribosomal subunit protein uS2 (240 aa).

The protein belongs to the universal ribosomal protein uS2 family.

This Haemophilus influenzae (strain 86-028NP) protein is Small ribosomal subunit protein uS2.